The sequence spans 371 residues: Aminomethyltransferase (371 aa).

The protein belongs to the GcvT family. The glycine cleavage system is composed of four proteins: P, T, L and H.

The enzyme catalyses N(6)-[(R)-S(8)-aminomethyldihydrolipoyl]-L-lysyl-[protein] + (6S)-5,6,7,8-tetrahydrofolate = N(6)-[(R)-dihydrolipoyl]-L-lysyl-[protein] + (6R)-5,10-methylene-5,6,7,8-tetrahydrofolate + NH4(+). The glycine cleavage system catalyzes the degradation of glycine. The chain is Aminomethyltransferase from Leptospira interrogans serogroup Icterohaemorrhagiae serovar Lai (strain 56601).